Reading from the N-terminus, the 264-residue chain is tRNA pseudouridine synthase A (264 aa).

Asp54 acts as the Nucleophile in catalysis. Tyr113 contacts substrate.

Belongs to the tRNA pseudouridine synthase TruA family. Homodimer.

The enzyme catalyses uridine(38/39/40) in tRNA = pseudouridine(38/39/40) in tRNA. Formation of pseudouridine at positions 38, 39 and 40 in the anticodon stem and loop of transfer RNAs. The chain is tRNA pseudouridine synthase A from Leptospira biflexa serovar Patoc (strain Patoc 1 / Ames).